The following is an 81-amino-acid chain: Putative membrane protein insertion efficiency factor (81 aa).

This sequence belongs to the UPF0161 family.

The protein localises to the cell inner membrane. Functionally, could be involved in insertion of integral membrane proteins into the membrane. The polypeptide is Putative membrane protein insertion efficiency factor (Thermotoga maritima (strain ATCC 43589 / DSM 3109 / JCM 10099 / NBRC 100826 / MSB8)).